The chain runs to 589 residues: uncharacterized protein (589 aa).

The next 5 membrane-spanning stretches (helical) occupy residues L11–A31, L57–L77, F97–A117, I190–I210, and G213–G233. Positions L57–L357 constitute an ABC transmembrane type-1 domain. The region spanning V390–C587 is the ABC transporter domain. G423–T430 lines the ATP pocket.

This sequence belongs to the ABC transporter superfamily.

It is found in the cell inner membrane. This is an uncharacterized protein from Haemophilus influenzae (strain ATCC 51907 / DSM 11121 / KW20 / Rd).